The chain runs to 379 residues: Glutamate 5-kinase (379 aa).

K15 is a binding site for ATP. Residues S56, D143, and N155 each coordinate substrate. Residue 175–176 (SD) coordinates ATP. Residues 281 to 358 (KGTLTIDAGA…CDAAQILGIS (78 aa)) form the PUA domain.

The protein belongs to the glutamate 5-kinase family.

The protein localises to the cytoplasm. The enzyme catalyses L-glutamate + ATP = L-glutamyl 5-phosphate + ADP. It functions in the pathway amino-acid biosynthesis; L-proline biosynthesis; L-glutamate 5-semialdehyde from L-glutamate: step 1/2. Functionally, catalyzes the transfer of a phosphate group to glutamate to form L-glutamate 5-phosphate. In Nitrobacter hamburgensis (strain DSM 10229 / NCIMB 13809 / X14), this protein is Glutamate 5-kinase.